Here is a 106-residue protein sequence, read N- to C-terminus: Small ribosomal subunit protein uS10 (106 aa).

This sequence belongs to the universal ribosomal protein uS10 family. Part of the 30S ribosomal subunit.

Its function is as follows. Involved in the binding of tRNA to the ribosomes. In Caldicellulosiruptor saccharolyticus (strain ATCC 43494 / DSM 8903 / Tp8T 6331), this protein is Small ribosomal subunit protein uS10.